Reading from the N-terminus, the 367-residue chain is MTHLNFETRMPLGTAVIDQFLGLRPHPTKIQATYVWIDGTGENLRSKTRTFDKLPKRIEDYPIWNYDGSSTGQAKGRDSDRYLRPVAAYPDPFLGGGNKLVMCDTLDHQMQPTATSHRQACAEIMHEIRDTRPWFGMEQEYLIVDRDEHPLGWPKHGFPDPQGKYYCSVGADRAFGREVVETHYRACLHAGLNIFGTNAEVTPGQWEFQIGTCEGIDMGDQLWMSRYILHRVAEQFGVCVSLDPKPKVTMGDWNGAGCHTNFSTAEMRAPGGIAAIEAAMTGLKRTHLEAMKVYDPHGGEDNLRRLTGRHETSSADKFSWGVANRGCSIRIPRQVAAERKGYLEDRRPSSNCDPYQVTAMIAQSILF.

A GS beta-grasp domain is found at 30 to 110; the sequence is IQATYVWIDG…VMCDTLDHQM (81 aa). Residues 117–367 form the GS catalytic domain; the sequence is HRQACAEIMH…TAMIAQSILF (251 aa).

Belongs to the glutamine synthetase family. In terms of assembly, homooctamer.

It localises to the cytoplasm. It catalyses the reaction L-glutamate + NH4(+) + ATP = L-glutamine + ADP + phosphate + H(+). The chain is Probable glutamine synthetase (gln-2) from Caenorhabditis elegans.